The sequence spans 1852 residues: Dihydropyridine-sensitive L-type skeletal muscle calcium channel subunit alpha-1 (1852 aa).

The Cytoplasmic segment spans residues 1-70 (MESGSGGGGG…KTCINIVEWK (70 aa)). An I repeat occupies 57 to 354 (NPFRKTCINI…LVLGALSGEF (298 aa)). A helical transmembrane segment spans residues 71–86 (PFEIIILLTIFANCVA). Residues 87-107 (LAVFLPMPEEDTNNTNLTLES) lie on the Extracellular side of the membrane. N99 and N102 each carry an N-linked (GlcNAc...) asparagine glycan. Residues 108 to 127 (LEYIFLVIFTLECFLKIVAY) form a helical membrane-spanning segment. At 128-139 (GLLFHEGAYLRN) the chain is on the cytoplasmic side. The chain crosses the membrane as a helical span at residues 140–155 (CWNILDFVIVFMGLFT). At 156–176 (LVVDTINTIAGVPTEKGGGFD) the chain is on the extracellular side. Residues 177–195 (MKALRAFRVLRPLRLVSGV) traverse the membrane as a helical segment. Topologically, residues 196–214 (PSLQVVMSSILKSMLPLFH) are cytoplasmic. The chain crosses the membrane as a helical span at residues 215–234 (IALLVFFMVHIYAIMGLELF). The Extracellular portion of the chain corresponds to 235–326 (KCKMHKTCYY…WINDAMGNDW (92 aa)). N274 carries N-linked (GlcNAc...) asparagine glycosylation. The helical transmembrane segment at 327 to 351 (PWIYFLTLILVGSFFILNLVLGALS) threads the bilayer. Topologically, residues 352-447 (GEFTKEREES…RKCHVWVKSK (96 aa)) are cytoplasmic. Residues 374–391 (QQMDEDLEGYMEWITHAE) are binding to the beta subunit. An II repeat occupies 433–679 (NVVLRRKCHV…VFLAIAVDNL (247 aa)). The helical transmembrane segment at 448-466 (FFNWWVLLVVLLNTLVIAM) threads the bilayer. Residues 467–481 (EHHNQTEGLTSFQDT) are Extracellular-facing. N470 is a glycosylation site (N-linked (GlcNAc...) asparagine). A helical membrane pass occupies residues 482-501 (ANVILLACFTIEMVMKMYAF). Residues 502 to 509 (GPRAYFMS) lie on the Cytoplasmic side of the membrane. The chain crosses the membrane as a helical span at residues 510 to 528 (IFNRFDCFVVTIGILEIIL). The Extracellular portion of the chain corresponds to 529-538 (VVSNIMTPLG). A helical membrane pass occupies residues 539-557 (ISVMRCIRLLRLFKLTRYW). The Cytoplasmic portion of the chain corresponds to 558 to 576 (TSLNNLVASLLNSVKSIAS). The chain crosses the membrane as a helical span at residues 577 to 596 (LLLLLFLFIVIFALLGMQVF). The Extracellular segment spans residues 597 to 651 (GGKFNFPDRVIQRSNFDNFPQALISVFQVLTGEEWDSIMYNGIMAHGGPQSPGIL). A helical transmembrane segment spans residues 652–675 (VSIYFIILYVCGNFVLLNVFLAIA). Residues 676-815 (VDNLAEAESL…KLCHRIVNHT (140 aa)) are Cytoplasmic-facing. One copy of the III repeat lies at 802–1084 (HKFRKLCHRI…IFVGFVIVTF (283 aa)). Residues 816 to 834 (TFTNIILLFILLSSISLAA) form a helical membrane-spanning segment. Topologically, residues 835–850 (EDPIDPRSFRNKVLAY) are extracellular. Residues 851–870 (ADIVFTTVFTIEIVLKMTVY) form a helical membrane-spanning segment. Over 871–882 (GAFLHTGSFCRN) the chain is Cytoplasmic. A helical membrane pass occupies residues 883 to 901 (SFNILDLIVVGVSLLSMGM). Topologically, residues 902–908 (ESSTISV) are extracellular. Residues 909–927 (VKILRVLRVLRPLRAINRA) traverse the membrane as a helical segment. Over 928-946 (KGLKHVVQCMFVAIKTIGN) the chain is Cytoplasmic. A helical membrane pass occupies residues 947–966 (IVLVTMLLDFMFACIGVQLF). Residues 967-1056 (KGKLYYCTDP…TGPLYNNRVG (90 aa)) are Extracellular-facing. The tract at residues 1004–1093 (RMWVNSDFNF…FQKQGEQEYK (90 aa)) is dihydropyridine binding. The helical transmembrane segment at 1057–1081 (ISIFFIIYIIIIAFFMMNIFVGFVI) threads the bilayer. At 1082–1134 (VTFQKQGEQEYKDCELDKNQRQCVQYALKARPLKCYIPKNPHQYRVWYFVTSC) the chain is on the cytoplasmic side. Residues 1121–1405 (NPHQYRVWYF…LFVAIIMDNV (285 aa)) form an IV repeat. The chain crosses the membrane as a helical span at residues 1135 to 1153 (YFEYLMFFLIMLNTLCLGI). Residues 1154–1168 (QHCNQSDHITKLSDT) are Extracellular-facing. N1157 is a glycosylation site (N-linked (GlcNAc...) asparagine). A helical transmembrane segment spans residues 1169-1188 (LNLIFTVLFTGEMIVKLIAF). The Cytoplasmic segment spans residues 1189–1196 (KAKGYFGD). Residues 1197 to 1215 (PWNVFDFIIVVGSIVDVVL) traverse the membrane as a helical segment. Residues 1216–1252 (SEVDAALEARGGLWCLHGCAEVNPMQAIAEAENVRVS) lie on the Extracellular side of the membrane. Residues 1253-1271 (ITFFRLFRVLRLIKLLNRS) traverse the membrane as a helical segment. Residues 1272–1290 (EGIRNLLWTFIKSFQALPH) are Cytoplasmic-facing. Residues 1291–1310 (VGLLIVMLFFIYAVIGMQMF) form a helical membrane-spanning segment. The Extracellular segment spans residues 1311-1377 (GKVALVDGTE…GEEYTCGSSI (67 aa)). The segment at 1358 to 1424 (LCDAKSDYGP…LGPHHLDEFK (67 aa)) is dihydropyridine binding. A phenylalkylamine binding region spans residues 1370-1413 (EYTCGSSIAVFYFLSFYILCAFLIINLFVAIIMDNVDYLTRDWS). Residues 1378 to 1402 (AVFYFLSFYILCAFLIINLFVAIIM) traverse the membrane as a helical segment. Over 1403-1852 (DNVDYLTRDW…TKPKENTSAV (450 aa)) the chain is Cytoplasmic. Positions 1418–1453 (HHLDEFKKIWAEYDPEATGRIKHLDVVTLLRRIQPP) constitute an EF-hand domain. 5 residues coordinate Ca(2+): D1431, E1433, T1435, R1437, and D1442. Residues 1820–1852 (NRQSGKVTKRKRRPIPVPPGTKSTKPKENTSAV) form a disordered region.

It belongs to the calcium channel alpha-1 subunit (TC 1.A.1.11) family. In terms of assembly, multisubunit complex consisting of alpha-1, alpha-2, beta and delta subunits in a 1:1:1:1 ratio. The channel activity is directed by the pore-forming and voltage-sensitive alpha-1 subunit. In many cases, this subunit is sufficient to generate voltage-sensitive calcium channel activity. The auxiliary subunits beta and alpha-2/delta linked by a disulfide bridge regulate the channel activity. An additional gamma subunit is present only in skeletal muscle L-type channel. May be non-phosphorylated. As to expression, skeletal muscle.

The protein resides in the membrane. In terms of biological role, voltage-sensitive calcium channels (VSCC) mediate the entry of calcium ions into excitable cells and are also involved in a variety of calcium-dependent processes, including muscle contraction, gene expression, cell motility, cell division and cell death. The isoform alpha-1S gives rise to L-type calcium currents. Long-lasting (L-type) calcium channels belong to the 'high-voltage activated' (HVA) group. They are blocked by dihydropyridines (DHP), phenylalkylamines, and by benzothiazepines. Calcium channels containing the alpha-1S subunit play an important role in excitation-contraction coupling in skeletal muscle. This Cyprinus carpio (Common carp) protein is Dihydropyridine-sensitive L-type skeletal muscle calcium channel subunit alpha-1.